Here is a 79-residue protein sequence, read N- to C-terminus: Large ribosomal subunit protein uL29 (79 aa).

The protein belongs to the universal ribosomal protein uL29 family.

The sequence is that of Large ribosomal subunit protein uL29 from Tropheryma whipplei (strain Twist) (Whipple's bacillus).